Reading from the N-terminus, the 635-residue chain is Threonine--tRNA ligase (635 aa).

One can recognise a TGS domain in the interval 1 to 61; sequence MINISFPDGS…DNDCKLRILT (61 aa). A catalytic region spans residues 242 to 533; sequence DHRKLGRELD…LIEEYAGRFP (292 aa). Residues Cys-333, His-384, and His-510 each coordinate Zn(2+).

This sequence belongs to the class-II aminoacyl-tRNA synthetase family. Homodimer. The cofactor is Zn(2+).

The protein resides in the cytoplasm. The catalysed reaction is tRNA(Thr) + L-threonine + ATP = L-threonyl-tRNA(Thr) + AMP + diphosphate + H(+). Its function is as follows. Catalyzes the attachment of threonine to tRNA(Thr) in a two-step reaction: L-threonine is first activated by ATP to form Thr-AMP and then transferred to the acceptor end of tRNA(Thr). Also edits incorrectly charged L-seryl-tRNA(Thr). In Rickettsia conorii (strain ATCC VR-613 / Malish 7), this protein is Threonine--tRNA ligase.